The primary structure comprises 234 residues: Large ribosomal subunit protein uL1 (234 aa).

Belongs to the universal ribosomal protein uL1 family. In terms of assembly, part of the 50S ribosomal subunit.

Binds directly to 23S rRNA. The L1 stalk is quite mobile in the ribosome, and is involved in E site tRNA release. In terms of biological role, protein L1 is also a translational repressor protein, it controls the translation of the L11 operon by binding to its mRNA. The polypeptide is Large ribosomal subunit protein uL1 (Serratia proteamaculans (strain 568)).